The primary structure comprises 114 residues: Putative membrane protein insertion efficiency factor (114 aa).

This sequence belongs to the UPF0161 family.

It localises to the cell inner membrane. In terms of biological role, could be involved in insertion of integral membrane proteins into the membrane. The polypeptide is Putative membrane protein insertion efficiency factor (Nitrobacter hamburgensis (strain DSM 10229 / NCIMB 13809 / X14)).